We begin with the raw amino-acid sequence, 188 residues long: dCTP deaminase (188 aa).

Residues 111–116 (KSTYAR), 135–137 (TLE), Gln156, Tyr170, and Gln180 each bind dCTP. Catalysis depends on Glu137, which acts as the Proton donor/acceptor.

Belongs to the dCTP deaminase family. As to quaternary structure, homotrimer.

The catalysed reaction is dCTP + H2O + H(+) = dUTP + NH4(+). It participates in pyrimidine metabolism; dUMP biosynthesis; dUMP from dCTP (dUTP route): step 1/2. Functionally, catalyzes the deamination of dCTP to dUTP. The sequence is that of dCTP deaminase from Pseudomonas fluorescens (strain SBW25).